We begin with the raw amino-acid sequence, 1286 residues long: DNA-directed RNA polymerase 147 kDa polypeptide (1286 aa).

Belongs to the poxviridae DNA-directed RNA polymerase 147 kDa subunit family. In terms of assembly, the DNA-dependent RNA polymerase used for intermediate and late genes expression consists of eight subunits Rpo30/OPG66, Rpo7/OPG90, Rpo22/OPG103, Rpo147/OPG105, Rpo18/OPG119, Rpo19/OPG131, Rpo132/OPG151 and Rpo35/OPG156. The same holoenzyme, with the addition of the transcription-specificity factor OPG109, is used for early gene expression.

It localises to the virion. The enzyme catalyses RNA(n) + a ribonucleoside 5'-triphosphate = RNA(n+1) + diphosphate. Part of the DNA-dependent RNA polymerase which catalyzes the transcription of viral DNA into RNA using the four ribonucleoside triphosphates as substrates. Responsible for the transcription of early, intermediate and late genes. DNA-dependent RNA polymerase associates with the early transcription factor (ETF), itself composed of OPG118 and OPG133, thereby allowing the early genes transcription. Late transcription, and probably also intermediate transcription, require newly synthesized RNA polymerase. The polypeptide is DNA-directed RNA polymerase 147 kDa polypeptide (OPG105) (Vaccinia virus (strain Ankara) (VACV)).